Consider the following 632-residue polypeptide: Probable electron transfer flavoprotein-ubiquinone oxidoreductase, mitochondrial (632 aa).

93-107 (VCIVGAGPAGLSAAI) is a binding site for FAD. Residues C575, C601, C604, and C607 each contribute to the [4Fe-4S] cluster site. One can recognise a 4Fe-4S ferredoxin-type domain in the interval 592-621 (KRFVINSQNCVHCKTCDIKDPLQGIQWKTP).

This sequence belongs to the ETF-QO/FixC family. The cofactor is [4Fe-4S] cluster. FAD is required as a cofactor.

The protein resides in the mitochondrion inner membrane. The catalysed reaction is a ubiquinone + reduced [electron-transfer flavoprotein] = a ubiquinol + oxidized [electron-transfer flavoprotein] + H(+). Functionally, accepts electrons from ETF and reduces ubiquinone. This Schizosaccharomyces pombe (strain 972 / ATCC 24843) (Fission yeast) protein is Probable electron transfer flavoprotein-ubiquinone oxidoreductase, mitochondrial.